Here is a 101-residue protein sequence, read N- to C-terminus: Small ribosomal subunit protein uS14 (101 aa).

It belongs to the universal ribosomal protein uS14 family. As to quaternary structure, part of the 30S ribosomal subunit. Contacts proteins S3 and S10.

In terms of biological role, binds 16S rRNA, required for the assembly of 30S particles and may also be responsible for determining the conformation of the 16S rRNA at the A site. This is Small ribosomal subunit protein uS14 from Paenarthrobacter aurescens (strain TC1).